We begin with the raw amino-acid sequence, 524 residues long: Tissue-resident T-cell transcription regulator protein ZNF683 (524 aa).

Residues 130–142 are compositionally biased toward basic and acidic residues; sequence NKDKLGKQPERAG. Disordered stretches follow at residues 130–166 and 265–303; these read NKDK…NRKS and QALP…LSSQ. C2H2-type zinc fingers lie at residues 322–344 and 350–372; these read YECN…LRVH and FQCA…HLVH. The C2H2-type 3; degenerate zinc finger occupies 398 to 420; the sequence is REREVCHKRFSSSSNLKTHLRLH. The C2H2-type 4 zinc finger occupies 426-448; that stretch reads FQCSVCRSRFTQHIHLKLHHRLH.

The protein belongs to the krueppel C2H2-type zinc-finger protein family. As to expression, expressed in terminally differentiated effector CD8(+) T-cells, but not in naive and central memory cells. Expressed in terminally differentiated natural killer (NK) cells and natural killer (NKT) T-cells (at protein level). Expressed strongly in effector-type CD8(+) T-cells and weakly in naive and memory CD8(+) T-cells. Expressed in terminally differentiated natural killer (NK) cells. Isoform 2 is strongly expressed in effector CD8(+) T and natural killer (NK) cells. Isoform 1 is expressed in effector CD8(+) T and natural killer (NK) cells. In terms of tissue distribution, (Microbial infection) Expressed in cytomegalovirus (CMV)-infected effector CD8(+) T-cells (at protein level).

The protein resides in the nucleus. Transcription factor that mediates a transcriptional program in various innate and adaptive immune tissue-resident lymphocyte T-cell types such as tissue-resident memory T (Trm), natural killer (trNK) and natural killer T (NKT) cells and negatively regulates gene expression of proteins that promote the egress of tissue-resident T-cell populations from non-lymphoid organs. Plays a role in the development, retention and long-term establishment of adaptive and innate tissue-resident lymphocyte T cell types in non-lymphoid organs, such as the skin and gut, but also in other nonbarrier tissues like liver and kidney, and therefore may provide immediate immunological protection against reactivating infections or viral reinfection. Also plays a role in the differentiation of both thymic and peripheral NKT cells. Negatively regulates the accumulation of interferon-gamma (IFN-gamma) in NKT cells at steady state or after antigenic stimulation. Positively regulates granzyme B production in NKT cells after innate stimulation. Associates with the transcriptional repressor PRDM1/BLIMP1 to chromatin at gene promoter regions. Functionally, lacks transcriptional repressor activity. Binds to DNA within promoter regions of the transcriptional repressor PRDM1/BLIMP1 target sites. Unable to regulate interferon-gamma (IFN-gamma) production in cytomegalovirus (CMV)-infected effector CD8(+) T-cells. Its function is as follows. Transcriptional repressor that binds to DNA within promoter regions of the transcriptional repressor PRDM1/BLIMP1 target sites. Regulates interferon-gamma (IFN-gamma) production in cytomegalovirus (CMV)-infected effector CD8(+) T cells. This chain is Tissue-resident T-cell transcription regulator protein ZNF683, found in Homo sapiens (Human).